Reading from the N-terminus, the 87-residue chain is Translation initiation factor IF-1 (87 aa).

One can recognise an S1-like domain in the interval 16–87; that stretch reads LSKEDVIEME…TKGRISYRHK (72 aa).

Belongs to the IF-1 family. In terms of assembly, component of the 30S ribosomal translation pre-initiation complex which assembles on the 30S ribosome in the order IF-2 and IF-3, IF-1 and N-formylmethionyl-tRNA(fMet); mRNA recruitment can occur at any time during PIC assembly.

It localises to the cytoplasm. Its function is as follows. One of the essential components for the initiation of protein synthesis. Stabilizes the binding of IF-2 and IF-3 on the 30S subunit to which N-formylmethionyl-tRNA(fMet) subsequently binds. Helps modulate mRNA selection, yielding the 30S pre-initiation complex (PIC). Upon addition of the 50S ribosomal subunit IF-1, IF-2 and IF-3 are released leaving the mature 70S translation initiation complex. This chain is Translation initiation factor IF-1, found in Magnetococcus marinus (strain ATCC BAA-1437 / JCM 17883 / MC-1).